Reading from the N-terminus, the 126-residue chain is uncharacterized protein (126 aa).

Composition is skewed to basic residues over residues 21 to 31 and 41 to 83; these read RKKRKKRKKRR and RILK…RKRR. The disordered stretch occupies residues 21-83; that stretch reads RKKRKKRKKR…RSPRKRRKRR (63 aa).

This is an uncharacterized protein from Saccharomyces cerevisiae (strain ATCC 204508 / S288c) (Baker's yeast).